Consider the following 718-residue polypeptide: Heme peroxidase 2 (718 aa).

Residues 1–19 (MNLKPTILLFTILFLKCAT) form the signal peptide. The propeptide occupies 20–146 (FEVNEETERI…QANRRCSSPP (127 aa)). Disordered regions lie at residues 41–64 (RASE…ANSD) and 108–144 (LLQS…RCSS). Residues 45–64 (NSESEQTSQHIIVSQQANSD) are compositionally biased toward polar residues. The segment covering 109–118 (LQSSETTTTT) has biased composition (low complexity). Residues 126-139 (SKRSAIFRSKRQAN) are compositionally biased toward basic residues. C149 and C164 are oxidised to a cystine. Residue H241 is the Proton acceptor of the active site. D242 is a binding site for Ca(2+). An intrachain disulfide couples C262 to C272. S311, F313, D315, and S317 together coordinate Ca(2+). N-linked (GlcNAc...) asparagine glycosylation occurs at N354. An intrachain disulfide couples C358 to C366. H477 lines the heme b pocket. N-linked (GlcNAc...) asparagine glycosylation is found at N551, N592, N662, and N673. An intrachain disulfide couples C682 to C705.

The protein belongs to the peroxidase family. Heme b is required as a cofactor. As to expression, expressed in the hypodermis and gland cells of the pharynx. Specifically, there is low and transient expression from the distal bulb of the pharynx to the anterior of the buccal cavity. Whole body expression levels increase upon entry into the dauer phase.

Its subcellular location is the secreted. The enzyme catalyses 2 a phenolic donor + H2O2 = 2 a phenolic radical donor + 2 H2O. In terms of biological role, peroxidase which is involved in maintaining the cuticle integrity in the hypodermis and pharynx. It thus plays a role in conferring resistance against Gram-positive bacteria such as E.faecalis, S.aureus and C.diphtheriae, and yeast such as C.albicans. This is Heme peroxidase 2 from Caenorhabditis elegans.